Reading from the N-terminus, the 291-residue chain is Gamma-sarcoglycan (291 aa).

The chain crosses the membrane as a helical; Signal-anchor for type II membrane protein span at residues 38–58 (LFVLLLLIVLLVNFALTIWIL). The Extracellular portion of the chain corresponds to 59–291 (RVMWFSPVGM…TCHEHSHLCL (233 aa)). The N-linked (GlcNAc...) asparagine glycan is linked to N110. Cystine bridges form between C265/C290 and C267/C283.

This sequence belongs to the sarcoglycan beta/delta/gamma/zeta family. In terms of assembly, interacts with the syntrophin SNTA1. Cross-link to form 2 major subcomplexes: one consisting of SGCB, SGCD and SGCG and the other consisting of SGCB and SGCD. The association between SGCB and SGCG is particularly strong while SGCA is loosely associated with the other sarcoglycans. Interacts with FLNC. Post-translationally, disulfide bonds are present.

It localises to the cell membrane. The protein localises to the sarcolemma. The protein resides in the cytoplasm. Its subcellular location is the cytoskeleton. Functionally, component of the sarcoglycan complex, a subcomplex of the dystrophin-glycoprotein complex which forms a link between the F-actin cytoskeleton and the extracellular matrix. In Bos taurus (Bovine), this protein is Gamma-sarcoglycan (SGCG).